A 123-amino-acid chain; its full sequence is Small ribosomal subunit protein uS12 (123 aa).

The residue at position 89 (Asp-89) is a 3-methylthioaspartic acid.

It belongs to the universal ribosomal protein uS12 family. Part of the 30S ribosomal subunit. Contacts proteins S8 and S17. May interact with IF1 in the 30S initiation complex.

With S4 and S5 plays an important role in translational accuracy. Functionally, interacts with and stabilizes bases of the 16S rRNA that are involved in tRNA selection in the A site and with the mRNA backbone. Located at the interface of the 30S and 50S subunits, it traverses the body of the 30S subunit contacting proteins on the other side and probably holding the rRNA structure together. The combined cluster of proteins S8, S12 and S17 appears to hold together the shoulder and platform of the 30S subunit. This is Small ribosomal subunit protein uS12 from Methylorubrum extorquens (strain PA1) (Methylobacterium extorquens).